A 2352-amino-acid polypeptide reads, in one-letter code: Highly reducing polyketide synthase ZEA2 (2352 aa).

One can recognise a Ketosynthase family 3 (KS3) domain in the interval 9 to 433 (PGPVAIVGLA…GTNGHVVLEA (425 aa)). Residues Cys-181, His-316, and His-356 each act as for beta-ketoacyl synthase activity in the active site. The segment at 544-875 (FVFTGQGAQW…LATSLFLQGV (332 aa)) is malonyl-CoA:ACP transacylase (MAT) domain. The active-site For malonyltransferase activity is the Ser-634. Residues 923–1058 (RSIIGAPVPK…GLITIDYEGN (136 aa)) are N-terminal hotdog fold. The 320-residue stretch at 923–1242 (RSIIGAPVPK…TSELEMDGAA (320 aa)) folds into the PKS/mFAS DH domain. Residues 925–1237 (IIGAPVPKMN…VIDFRTSELE (313 aa)) form a dehydratase (DH) domain region. The active-site Proton acceptor; for dehydratase activity is His-955. The tract at residues 1086–1242 (PATYAKDRFY…TSELEMDGAA (157 aa)) is C-terminal hotdog fold. The Proton donor; for dehydratase activity role is filled by Asp-1152. The tract at residues 1643–1955 (GLLDTLYFVD…QGKHRGKIVL (313 aa)) is enoylreductase (ER) domain. A catalytic ketoreductase (KRc) domain region spans residues 1979 to 2159 (ATYLFVGGLG…VSVNLGIMRD (181 aa)). One can recognise a Carrier domain in the interval 2269–2346 (KATEIITNAL…SFAGKLASTS (78 aa)). Position 2306 is an O-(pantetheine 4'-phosphoryl)serine (Ser-2306).

It functions in the pathway mycotoxin biosynthesis. In terms of biological role, highly reducing polyketide synthase; part of the gene cluster that mediates the biosynthesis of zearalenone (ZEA), a nonsteroid estrogen that is a contaminant of cereal grains and causes estrogenic disorders in humans and animals. The ZEA backbone is synthesized from a single acetyl-CoA molecule and eight malonyl-CoA molecules. The reducing polyketide synthase ZEA2 is proposed to synthesize a reduced hexaketide intermediate by using different combinations of its reductive domains during each round of condensation. The hexaketide thioester is then transacylated to the non-reducing polyketide synthase ZEA1 and is further condensed with three malonyl-CoAs without reductive tailoring to yield a mixed reduced/unreduced nonaketide. ZEA1 must be able to interact with ZEA2 to facilitate starter-unit acyltransfer and initiate polyketide biosynthesis. ZEA1 also mediates the required C2-C7 cyclization to form the resorcylate core and catalyzes the formation of the macrolactone. ZEB1 is then responsible for the chemical conversion of beta-zearalenonol (beta-ZOL) to ZEA in the biosynthetic pathway. This is Highly reducing polyketide synthase ZEA2 from Gibberella zeae (strain ATCC MYA-4620 / CBS 123657 / FGSC 9075 / NRRL 31084 / PH-1) (Wheat head blight fungus).